The primary structure comprises 218 residues: Transmembrane gamma-carboxyglutamic acid protein 1 (218 aa).

Positions 1–20 are excised as a propeptide; sequence MGRVFLTGEKANSVLKRYPR. The Gla domain occupies 20 to 66; that stretch reads RANGFFEEIRQGNIERECKEEFCTFEEAREAFENNEKTKEFWSTYTK. Residues 21–80 are Extracellular-facing; the sequence is ANGFFEEIRQGNIERECKEEFCTFEEAREAFENNEKTKEFWSTYTKAQQGESNRGSDWFQ. Cysteines 37 and 42 form a disulfide. Residues 81-101 traverse the membrane as a helical segment; sequence FYLTFPLIFGLFIILLVIFLI. The Cytoplasmic portion of the chain corresponds to 102–218; sequence WRCFLRNKTR…PMVPVVTTIK (117 aa). Positions 161–195 are disordered; sequence TRLSNCDPPPTYEEATGQVNLQRSETEPHLDPPPE.

Gla residues are produced after subsequent post-translational modifications of glutamate by a vitamin K-dependent gamma-carboxylase.

It localises to the membrane. The polypeptide is Transmembrane gamma-carboxyglutamic acid protein 1 (PRRG1) (Pongo abelii (Sumatran orangutan)).